Here is a 149-residue protein sequence, read N- to C-terminus: Large ribosomal subunit protein bL9 (149 aa).

This sequence belongs to the bacterial ribosomal protein bL9 family.

Binds to the 23S rRNA. The chain is Large ribosomal subunit protein bL9 from Shewanella amazonensis (strain ATCC BAA-1098 / SB2B).